A 423-amino-acid polypeptide reads, in one-letter code: Glycine amidinotransferase, mitochondrial (423 aa).

A mitochondrion-targeting transit peptide spans 1–43 (MLRVRCLRGGSRGAEAVHYIGSRLGRTLTGWVQRTFQSTQAAT). 2 positions are modified to phosphoserine: S46 and S49. D170 is a binding site for arginine. Residues D254 and H303 contribute to the active site. The arginine site is built by D305, R322, S354, and S355. At K385 the chain carries N6-acetyllysine. C407 serves as the catalytic Amidino-cysteine intermediate.

Belongs to the amidinotransferase family. Homodimer. There is an equilibrium between the monomeric and dimeric forms, shifted towards the side of the monomer. As to expression, expressed in brain, heart, kidney, liver, lung, salivary gland and skeletal muscle tissue, with the highest expression in kidney. Biallelically expressed in placenta and fetal tissues.

The protein localises to the mitochondrion inner membrane. Its subcellular location is the cytoplasm. It carries out the reaction L-arginine + glycine = guanidinoacetate + L-ornithine. The enzyme catalyses 4-aminobutanoate + L-arginine = 4-guanidinobutanoate + L-ornithine. The catalysed reaction is beta-alanine + L-arginine = 3-guanidinopropanoate + L-ornithine. It catalyses the reaction taurine + L-arginine = taurocyamine + L-ornithine. It participates in amine and polyamine biosynthesis; creatine biosynthesis; creatine from L-arginine and glycine: step 1/2. In terms of biological role, transamidinase that catalyzes the transfer of the amidino group of L-arginine onto the amino moiety of acceptor metabolites such as glycine, beta-alanine, gamma-aminobutyric acid (GABA) and taurine yielding the corresponding guanidine derivatives. Catalyzes the rate-limiting step of creatine biosynthesis, namely the transfer of the amidino group from L-arginine to glycine to generate guanidinoacetate, which is then methylated by GAMT to form creatine. Provides creatine as a source for ATP generation in tissues with high energy demands, in particular skeletal muscle, heart and brain. This is Glycine amidinotransferase, mitochondrial (GATM) from Homo sapiens (Human).